The sequence spans 459 residues: Ribulose bisphosphate carboxylase large chain (459 aa).

Lys-4 is subject to N6,N6,N6-trimethyllysine. Positions 113 and 163 each coordinate substrate. Lys-165 serves as the catalytic Proton acceptor. Lys-167 is a binding site for substrate. Positions 191, 193, and 194 each coordinate Mg(2+). Lys-191 carries the N6-carboxylysine modification. Residue His-284 is the Proton acceptor of the active site. Residues Arg-285, His-317, and Ser-369 each coordinate substrate.

This sequence belongs to the RuBisCO large chain family. Type I subfamily. As to quaternary structure, heterohexadecamer of 8 large chains and 8 small chains; disulfide-linked. The disulfide link is formed within the large subunit homodimers. Mg(2+) is required as a cofactor. In terms of processing, the disulfide bond which can form in the large chain dimeric partners within the hexadecamer appears to be associated with oxidative stress and protein turnover.

It is found in the plastid. The protein resides in the chloroplast. It carries out the reaction 2 (2R)-3-phosphoglycerate + 2 H(+) = D-ribulose 1,5-bisphosphate + CO2 + H2O. The enzyme catalyses D-ribulose 1,5-bisphosphate + O2 = 2-phosphoglycolate + (2R)-3-phosphoglycerate + 2 H(+). Its function is as follows. RuBisCO catalyzes two reactions: the carboxylation of D-ribulose 1,5-bisphosphate, the primary event in carbon dioxide fixation, as well as the oxidative fragmentation of the pentose substrate in the photorespiration process. Both reactions occur simultaneously and in competition at the same active site. This Roridula gorgonias (South African fly bush) protein is Ribulose bisphosphate carboxylase large chain.